The sequence spans 248 residues: PF03932 family protein CutC (248 aa).

Belongs to the CutC family. As to quaternary structure, homodimer.

It is found in the cytoplasm. In Escherichia coli O81 (strain ED1a), this protein is PF03932 family protein CutC.